We begin with the raw amino-acid sequence, 61 residues long: Short neurotoxin 2 (61 aa).

Cystine bridges form between Cys3/Cys23, Cys17/Cys40, Cys42/Cys53, and Cys54/Cys59.

Belongs to the three-finger toxin family. Short-chain subfamily. Type I alpha-neurotoxin sub-subfamily. In terms of tissue distribution, expressed by the venom gland.

It is found in the secreted. Binds to muscle nicotinic acetylcholine receptor (nAChR) and inhibit acetylcholine from binding to the receptor, thereby impairing neuromuscular transmission. In Hemachatus haemachatus (Rinkhals), this protein is Short neurotoxin 2.